Consider the following 149-residue polypeptide: UPF0336 protein CMM_2793 (149 aa).

The MaoC-like domain occupies 16–117; sequence APYLVGREKV…TVTKVATLGG (102 aa).

The protein belongs to the UPF0336 family.

The chain is UPF0336 protein CMM_2793 from Clavibacter michiganensis subsp. michiganensis (strain NCPPB 382).